A 92-amino-acid polypeptide reads, in one-letter code: Small ribosomal subunit protein uS19 (92 aa).

This sequence belongs to the universal ribosomal protein uS19 family.

In terms of biological role, protein S19 forms a complex with S13 that binds strongly to the 16S ribosomal RNA. This Neisseria meningitidis serogroup C (strain 053442) protein is Small ribosomal subunit protein uS19.